The following is a 261-amino-acid chain: UPF0246 protein Rmet_0978 (261 aa).

Belongs to the UPF0246 family.

The protein is UPF0246 protein Rmet_0978 of Cupriavidus metallidurans (strain ATCC 43123 / DSM 2839 / NBRC 102507 / CH34) (Ralstonia metallidurans).